A 210-amino-acid polypeptide reads, in one-letter code: 3-hexulose-6-phosphate synthase (210 aa).

The protein belongs to the HPS/KGPDC family. HPS subfamily.

The catalysed reaction is D-ribulose 5-phosphate + formaldehyde = D-arabino-hex-3-ulose 6-phosphate. It functions in the pathway one-carbon metabolism; formaldehyde assimilation via RuMP pathway; D-fructose 6-phosphate from D-ribulose 5-phosphate and formaldehyde: step 1/2. Its function is as follows. Catalyzes the condensation of ribulose 5-phosphate with formaldehyde to form 3-hexulose 6-phosphate. The chain is 3-hexulose-6-phosphate synthase from Staphylococcus epidermidis (strain ATCC 35984 / DSM 28319 / BCRC 17069 / CCUG 31568 / BM 3577 / RP62A).